Consider the following 965-residue polypeptide: PWWP domain-containing protein 4 (965 aa).

The PWWP domain occupies 135–196 (VGDMVWGKVK…PAELIPFEPH (62 aa)). Residues 437-455 (MNFTSSSGNIPGKKSSVSK) show a composition bias toward polar residues. Disordered stretches follow at residues 437–507 (MNFT…KSSL), 526–577 (VVKR…KSSQ), 649–708 (SAKT…SLAP), and 905–927 (LSSQ…PPLD). 2 stretches are compositionally biased toward basic and acidic residues: residues 456 to 474 (LSRD…RMGE) and 481 to 495 (DQEK…KQDE). Positions 496–507 (TGTNSRSNKSSL) are enriched in polar residues. Residues 546 to 553 (KKKEYVSE) carry the Nuclear localization signal motif. Positions 549–563 (EYVSELNRDTPDKRK) are enriched in basic and acidic residues. Polar residues predominate over residues 657–676 (NEQSKAGRNRISSDSQQDVP). Basic and acidic residues predominate over residues 691–702 (ASDKKTNQDATK). Positions 905–919 (LSSQDSEPKPVNNQV) are enriched in polar residues.

The protein belongs to the PDP family. In terms of assembly, component of the PRC2 (polycomb repressive complex 2) complex which regulates histone methylation on histone H3K27.

The protein resides in the nucleus. May influence gene expression by regulating the function of the PRC2 complex and modulating H3K27me3 level. This chain is PWWP domain-containing protein 4, found in Arabidopsis thaliana (Mouse-ear cress).